The chain runs to 406 residues: 2,3-bisphosphoglycerate-independent phosphoglycerate mutase (406 aa).

Residues 156 to 183 (NLSDKISDSDPHSEGKPPEPIRPLDPSA) are disordered. The span at 160-174 (KISDSDPHSEGKPPE) shows a compositional bias: basic and acidic residues.

It belongs to the BPG-independent phosphoglycerate mutase family. A-PGAM subfamily.

It carries out the reaction (2R)-2-phosphoglycerate = (2R)-3-phosphoglycerate. The protein operates within carbohydrate degradation; glycolysis; pyruvate from D-glyceraldehyde 3-phosphate: step 3/5. Catalyzes the interconversion of 2-phosphoglycerate and 3-phosphoglycerate. The polypeptide is 2,3-bisphosphoglycerate-independent phosphoglycerate mutase (Thermoplasma volcanium (strain ATCC 51530 / DSM 4299 / JCM 9571 / NBRC 15438 / GSS1)).